Reading from the N-terminus, the 338-residue chain is Lipoate-protein ligase A (338 aa).

The BPL/LPL catalytic domain maps to 29–216; that stretch reads PATQRVLFLW…AFFAHYGERV (188 aa). ATP contacts are provided by residues Arg71, 76–79, and Lys134; that span reads GAVF. Lys134 contacts (R)-lipoate.

Belongs to the LplA family. As to quaternary structure, monomer.

Its subcellular location is the cytoplasm. It catalyses the reaction L-lysyl-[lipoyl-carrier protein] + (R)-lipoate + ATP = N(6)-[(R)-lipoyl]-L-lysyl-[lipoyl-carrier protein] + AMP + diphosphate + H(+). It participates in protein modification; protein lipoylation via exogenous pathway; protein N(6)-(lipoyl)lysine from lipoate: step 1/2. Its pathway is protein modification; protein lipoylation via exogenous pathway; protein N(6)-(lipoyl)lysine from lipoate: step 2/2. Its function is as follows. Catalyzes both the ATP-dependent activation of exogenously supplied lipoate to lipoyl-AMP and the transfer of the activated lipoyl onto the lipoyl domains of lipoate-dependent enzymes. This chain is Lipoate-protein ligase A, found in Salmonella choleraesuis (strain SC-B67).